The primary structure comprises 166 residues: Large ribosomal subunit protein uL10 (166 aa).

Belongs to the universal ribosomal protein uL10 family. In terms of assembly, part of the ribosomal stalk of the 50S ribosomal subunit. The N-terminus interacts with L11 and the large rRNA to form the base of the stalk. The C-terminus forms an elongated spine to which L12 dimers bind in a sequential fashion forming a multimeric L10(L12)X complex.

Its function is as follows. Forms part of the ribosomal stalk, playing a central role in the interaction of the ribosome with GTP-bound translation factors. The chain is Large ribosomal subunit protein uL10 from Pseudomonas putida (strain GB-1).